The primary structure comprises 474 residues: Glutamine synthetase (474 aa).

In terms of domain architecture, GS beta-grasp spans 15–99 (EDVQFIDVRF…MTFFIHDPIT (85 aa)). One can recognise a GS catalytic domain in the interval 107–474 (PRNIAKKAET…PYEFTLYYDI (368 aa)). Residues E132 and E134 each coordinate Mg(2+). E210 provides a ligand contact to ATP. Mg(2+) contacts are provided by E215 and E223. L-glutamate is bound by residues 267 to 268 (NG) and G268. H272 lines the Mg(2+) pocket. ATP is bound by residues 274 to 276 (HSS) and S276. Residues R325, E331, and R343 each contribute to the L-glutamate site. Residues R343, R348, and K357 each contribute to the ATP site. E362 is a binding site for Mg(2+). R364 serves as a coordination point for L-glutamate. The residue at position 402 (Y402) is an O-AMP-tyrosine.

Belongs to the glutamine synthetase family. Oligomer of 12 subunits arranged in the form of two hexagons. Requires Mg(2+) as cofactor.

The protein resides in the cytoplasm. The catalysed reaction is L-glutamate + NH4(+) + ATP = L-glutamine + ADP + phosphate + H(+). Its activity is regulated as follows. The activity of this enzyme could be controlled by adenylation under conditions of abundant glutamine. Catalyzes the ATP-dependent biosynthesis of glutamine from glutamate and ammonia. This is Glutamine synthetase from Frankia alni.